We begin with the raw amino-acid sequence, 126 residues long: Protein translocase subunit SecE (126 aa).

Transmembrane regions (helical) follow at residues 18 to 38, 40 to 60, and 97 to 117; these read LKWV…YLYG, LSVV…LGVA, and IVLA…GIMV.

Belongs to the SecE/SEC61-gamma family. Component of the Sec protein translocase complex. Heterotrimer consisting of SecY, SecE and SecG subunits. The heterotrimers can form oligomers, although 1 heterotrimer is thought to be able to translocate proteins. Interacts with the ribosome. Interacts with SecDF, and other proteins may be involved. Interacts with SecA.

The protein resides in the cell inner membrane. In terms of biological role, essential subunit of the Sec protein translocation channel SecYEG. Clamps together the 2 halves of SecY. May contact the channel plug during translocation. The polypeptide is Protein translocase subunit SecE (Vibrio cholerae serotype O1 (strain ATCC 39315 / El Tor Inaba N16961)).